A 570-amino-acid chain; its full sequence is GDP-Man:Man(3)GlcNAc(2)-PP-Dol alpha-1,2-mannosyltransferase (570 aa).

Over 1–7 (MKLADFV) the chain is Lumenal. The chain crosses the membrane as a helical span at residues 8-70 (TYVFGSLLAG…DFGWKNSSVR (63 aa)). Residues 71–200 (RAFILASERP…RLVESKSWPK (130 aa)) are Cytoplasmic-facing. An intramembrane region (helical) is located at residues 201–221 (FTLLGQAYGSIILSIEALTTL). The Cytoplasmic segment spans residues 222–446 (APDYWIDTMG…FGINAMWNEH (225 aa)). Positions 447–467 (FGIAVVEYMASGLIPLCHASA) form an intramembrane region, helical. At 468 to 570 (GPLYDIVVPW…LNLTHNRMFS (103 aa)) the chain is on the cytoplasmic side.

This sequence belongs to the glycosyltransferase group 1 family.

The protein resides in the endoplasmic reticulum membrane. It carries out the reaction an alpha-D-Man-(1-&gt;3)-[alpha-D-Man-(1-&gt;6)]-beta-D-Man-(1-&gt;4)-beta-D-GlcNAc-(1-&gt;4)-alpha-D-GlcNAc-diphospho-di-trans,poly-cis-dolichol + 2 GDP-alpha-D-mannose = an alpha-D-Man-(1-&gt;2)-alpha-D-Man-(1-&gt;2)-alpha-D-Man-(1-&gt;3)-[alpha-D-Man-(1-&gt;6)]-beta-D-Man-(1-&gt;4)-beta-D-GlcNAc-(1-&gt;4)-alpha-D-GlcNAc-diphospho-di-trans,poly-cis-dolichol + 2 GDP + 2 H(+). The protein operates within protein modification; protein glycosylation. Functionally, GDP-Man:Man(3)GlcNAc(2)-PP-Dol alpha-1,2-mannosyltransferase that operates in the biosynthetic pathway of dolichol-linked oligosaccharides, the glycan precursors employed in protein asparagine (N)-glycosylation. The assembly of dolichol-linked oligosaccharides begins on the cytosolic side of the endoplasmic reticulum membrane and finishes in its lumen. The sequential addition of sugars to dolichol pyrophosphate produces dolichol-linked oligosaccharides containing fourteen sugars, including two GlcNAcs, nine mannoses and three glucoses. Once assembled, the oligosaccharide is transferred from the lipid to nascent proteins by oligosaccharyltransferases. Catalyzes, on the cytoplasmic face of the endoplasmic reticulum, the addition of the fourth and fifth mannose residues to the dolichol-linked oligosaccharide chain, to produce Man(5)GlcNAc(2)-PP-dolichol core oligosaccharide. This Kluyveromyces lactis (strain ATCC 8585 / CBS 2359 / DSM 70799 / NBRC 1267 / NRRL Y-1140 / WM37) (Yeast) protein is GDP-Man:Man(3)GlcNAc(2)-PP-Dol alpha-1,2-mannosyltransferase (ALG11).